The following is a 132-amino-acid chain: PGA2-homolog C27.01c (132 aa).

The chain crosses the membrane as a helical span at residues 17–34 (WIRIIVYVGGYMLIRPYL). Disordered stretches follow at residues 50–90 (LLEG…DAEF) and 106–132 (EYFKNQDKSPLDAYADDDEDIEEHLED). The span at 62–75 (EMTHGTKPKEHGEF) shows a compositional bias: basic and acidic residues. The segment covering 76 to 87 (DTDDEEEEENPD) has biased composition (acidic residues). Phosphothreonine is present on Thr-77. Residues 106–115 (EYFKNQDKSP) are compositionally biased toward basic and acidic residues. A compositionally biased stretch (acidic residues) spans 119-132 (YADDDEDIEEHLED).

The protein belongs to the PGA2 family.

The protein resides in the endoplasmic reticulum membrane. Its subcellular location is the nucleus membrane. In terms of biological role, involved processing and trafficking glycosylated proteins. In Schizosaccharomyces pombe (strain 972 / ATCC 24843) (Fission yeast), this protein is PGA2-homolog C27.01c.